A 700-amino-acid chain; its full sequence is Phenylalanine ammonia-lyase hkm12 (700 aa).

The active-site Proton donor/acceptor is Tyr82. A cross-link (5-imidazolinone (Ala-Gly)) is located at residues 183–185; it reads ASG. The residue at position 184 (Ser184) is a 2,3-didehydroalanine (Ser). Residues Asn242, Gln325, Arg331, Asn361, Lys432, Glu460, and Asn463 each contribute to the (E)-cinnamate site.

This sequence belongs to the PAL/histidase family. In terms of processing, contains an active site 4-methylidene-imidazol-5-one (MIO), which is formed autocatalytically by cyclization and dehydration of residues Ala-Ser-Gly.

The catalysed reaction is L-phenylalanine = (E)-cinnamate + NH4(+). It functions in the pathway secondary metabolite biosynthesis. Functionally, phenylalanine ammonia-lyase; part of the gene cluster that mediates the biosynthesis of hancockiamides, an unusual new family of N-cinnamoylated piperazines. The NRPS hkm10 and the NmrA-like reductase hkm9 are proposed to convert two molecules of L-Phe to the intermediary piperazine called xenocockiamide A. Xenocockiamide A is then converted to hancockiamide D via a series of hydroxylations and O-methylations. The tyrosinase hkm6 may catalyze an aromatic hydroxylation, then the 2-oxoglutarate-dependent Fe(II) dioxygenase hkm4 and the FAD-dependent phenol hydroxylase hkm7 may catalyze consecutive hydroxylations to install 2 more hydroxy groups, and the methyltransferase hkm8 probably catalyzes two methylations using 2 molecules of S-adenosyl-L-methionine (SAM). The NRPS hkm11 activates and transfers trans-cinnamate supplied by the PAL hkm12 to hancockiamide D and produces hancockiamide A. NRPS Hkm11 has the flexibility to tolerate the bulky hancockiamide G as a substrate and the absence of the acetyl-transferase hkm3 opens up the opportunity for hkm11 to introduce a second N-cinnamoyl moiety. The cytochrome P450 monooxygenase hkm5 catalyzes the methylenedioxy bridge formation, converting hancockiamide A into hancockiamide G. Hkm5 can also convert hancockiamide B into hancockiamide C, and hancockiamide D into hancockiamide H. The N-acetyltransferase hkm3 finally transfers an acetyl group to 1-N of piperazine, converting hancockiamide A into hancockiamide B and hancockiamide G into hancockiamide C. The protein is Phenylalanine ammonia-lyase hkm12 of Aspergillus hancockii.